Here is a 359-residue protein sequence, read N- to C-terminus: Beta-hexosaminidase (359 aa).

Substrate-binding positions include Asp-64, Arg-72, Arg-138, and 168 to 169; that span reads KH. Catalysis depends on His-181, which acts as the Proton donor/acceptor. The Nucleophile role is filled by Asp-252.

The protein belongs to the glycosyl hydrolase 3 family. NagZ subfamily.

Its subcellular location is the cytoplasm. It carries out the reaction Hydrolysis of terminal non-reducing N-acetyl-D-hexosamine residues in N-acetyl-beta-D-hexosaminides.. It functions in the pathway cell wall biogenesis; peptidoglycan recycling. In terms of biological role, plays a role in peptidoglycan recycling by cleaving the terminal beta-1,4-linked N-acetylglucosamine (GlcNAc) from peptide-linked peptidoglycan fragments, giving rise to free GlcNAc, anhydro-N-acetylmuramic acid and anhydro-N-acetylmuramic acid-linked peptides. This Thiobacillus denitrificans (strain ATCC 25259 / T1) protein is Beta-hexosaminidase.